The primary structure comprises 44 residues: Keratin-associated protein 20-3 (44 aa).

This sequence belongs to the KRTAP type 20 family. In terms of assembly, interacts with hair keratins.

Its function is as follows. In the hair cortex, hair keratin intermediate filaments are embedded in an interfilamentous matrix, consisting of hair keratin-associated proteins (KRTAP), which are essential for the formation of a rigid and resistant hair shaft through their extensive disulfide bond cross-linking with abundant cysteine residues of hair keratins. The matrix proteins include the high-sulfur and high-glycine-tyrosine keratins. In Homo sapiens (Human), this protein is Keratin-associated protein 20-3 (KRTAP20-3).